The primary structure comprises 940 residues: Protein translocase subunit SecA (940 aa).

Residues glutamine 86, 104 to 108 (GEGKT), and aspartate 494 contribute to the ATP site. The interval 884–940 (ATAKAQKDQQAEDAVLVGEDEPETPQGPPARGAFGQPTGASSAPQNREERRKADRRK) is disordered. Basic and acidic residues predominate over residues 929–940 (NREERRKADRRK).

Belongs to the SecA family. As to quaternary structure, monomer and homodimer. Part of the essential Sec protein translocation apparatus which comprises SecA, SecYEG and auxiliary proteins SecDF. Other proteins may also be involved.

The protein localises to the cell membrane. It localises to the cytoplasm. The enzyme catalyses ATP + H2O + cellular proteinSide 1 = ADP + phosphate + cellular proteinSide 2.. In terms of biological role, part of the Sec protein translocase complex. Interacts with the SecYEG preprotein conducting channel. Has a central role in coupling the hydrolysis of ATP to the transfer of proteins into and across the cell membrane, serving as an ATP-driven molecular motor driving the stepwise translocation of polypeptide chains across the membrane. This Clavibacter sepedonicus (Clavibacter michiganensis subsp. sepedonicus) protein is Protein translocase subunit SecA.